Here is a 265-residue protein sequence, read N- to C-terminus: tRNA pseudouridine synthase A (265 aa).

The active-site Nucleophile is the Asp-58. Tyr-116 contacts substrate.

It belongs to the tRNA pseudouridine synthase TruA family. In terms of assembly, homodimer.

The catalysed reaction is uridine(38/39/40) in tRNA = pseudouridine(38/39/40) in tRNA. Its function is as follows. Formation of pseudouridine at positions 38, 39 and 40 in the anticodon stem and loop of transfer RNAs. The sequence is that of tRNA pseudouridine synthase A from Neisseria meningitidis serogroup B (strain ATCC BAA-335 / MC58).